A 420-amino-acid polypeptide reads, in one-letter code: Protein disulfide isomerase CRELD1 (420 aa).

The first 29 residues, 1-29 (MAPWPPKGLVPAMLWGLSLFLNLPGPIWL), serve as a signal peptide directing secretion. At 30 to 362 (QPSPPPQSSP…GFFSEMTEDE (333 aa)) the chain is on the extracellular side. Positions 46 to 49 (CHTC) match the CXXC motif. Cysteines 46 and 49 form a disulfide. The N-linked (GlcNAc...) asparagine glycan is linked to Asn-79. Residues 153–193 (LPCPGGTERPCGGYGQCEGEGTRGGSGHCDCQAGYGGEACG) form the EGF-like 1 domain. Intrachain disulfides connect Cys-155–Cys-169, Cys-163–Cys-181, and Cys-183–Cys-192. N-linked (GlcNAc...) asparagine glycosylation is present at Asn-205. 2 FU repeats span residues 208–256 (HLVC…GANC) and 268–315 (SYEC…EVCP). Positions 278 to 281 (CLGC) match the CXXC motif. 4 cysteine pairs are disulfide-bonded: Cys-278/Cys-281, Cys-309/Cys-321, Cys-314/Cys-330, and Cys-332/Cys-343. The EGF-like 2; calcium-binding domain maps to 305–344 (DVDECETEVCPGENKQCENTEGGYRCICAEGYKQMEGICV). A helical membrane pass occupies residues 363-383 (LVVLQQMFFGIIICALATLAA). A topological domain (cytoplasmic) is located at residue Lys-384. Residues 385–405 (GDLVFTAIFIGAVAAMTGYWL) traverse the membrane as a helical segment. At 406–420 (SERSDRVLEGFIKGR) the chain is on the extracellular side.

This sequence belongs to the CRELD family. Highly expressed in fetal lung, liver, kidney, adult heart, brain and skeletal muscle. Weakly expressed in placenta, fetal brain, and adult lung, liver, kidney and pancreas.

The protein resides in the membrane. It catalyses the reaction Catalyzes the rearrangement of -S-S- bonds in proteins.. Its function is as follows. Protein disulfide isomerase. Promotes the localization of acetylcholine receptors (AChRs) to the plasma membrane. The chain is Protein disulfide isomerase CRELD1 (CRELD1) from Homo sapiens (Human).